Reading from the N-terminus, the 619-residue chain is CREB-regulated transcription coactivator 3 (619 aa).

The interval 1-103 is required for interaction with HTLV-1 TAX; the sequence is MAASPGSGSA…LVERPSRNRF (103 aa). 2 positions are modified to phosphoserine: Ser-4 and Ser-62. The tract at residues 103-150 is disordered; that stretch reads FHPLHRRSGDKPGRQFDGSAFGANYSSQPLDESWPRQQPPWKDEKHPG. Thr-160 carries the phosphothreonine modification. A Phosphoserine; by SIK2 modification is found at Ser-162. The span at 165–175 shows a compositional bias: polar residues; that stretch reads ALHTSALSTKP. The interval 165 to 185 is disordered; the sequence is ALHTSALSTKPQDPYGGGGQS. Lys-232 is covalently cross-linked (Glycyl lysine isopeptide (Lys-Gly) (interchain with G-Cter in SUMO2)). Ser-273, Ser-329, Ser-332, Ser-370, Ser-391, Ser-396, Ser-410, and Ser-443 each carry phosphoserine. The segment at 375–431 is disordered; that stretch reads STTNLSGPSRRRQPPVSPLTLSPGPEAHQGFSRQLSSTSPLAPYPTSQMVSSDRSQL. Residues 380–401 form a required for interaction with PPP2CA and PPP2R1A region; that stretch reads SGPSRRRQPPVSPLTLSPGPEA. Residues 405 to 431 show a composition bias toward polar residues; it reads FSRQLSSTSPLAPYPTSQMVSSDRSQL.

The protein belongs to the TORC family. As to quaternary structure, binding, as a tetramer, through its N-terminal region, with the bZIP domain of CREB1 enhances recruitment of TAF4 to the promoter. 'Arg-314' in the bZIP domain of CREB1 is essential for this interaction. Interacts (when phosphorylated at Ser-162 and Se-273) with 14-3-3 proteins. Interacts with YWHAE. Interacts (when phosphorylated at Ser-391) with phosphatase PP2A catalytic subunit PPP2CA and regulatory subunits PPP2R1A and PPP2R2A. Interacts, via the N-terminal with the ankyrin repeats of BCL3, to form a complex with CREB1 on CRE and TxRE responsive elements and represses HTLV-1 LTR-mediated transcription. (Microbial infection) Interacts with HTLV-1 protein Tax; this interaction enhances tax transcriptional activity. In terms of processing, phosphorylation/dephosphorylation states of Ser-273 are required for regulating transduction of CREB activity. CRTCs/TORCs are inactive when phosphorylated, and active when dephosphorylated at this site. May be phosphorylated at Ser-391 by MAPK3/ERK1 and/or MAPK1/ERK2 or by some cyclin-dependent kinases such as CDK1,CDK2 or CDK5. Following adenylyl cyclase activation, dephosphorylated at Ser-162 and Ser-273 resulting in its dissociation from 14-3-3 proteins probably promoting CRTC3 translocation into the nucleus. As to expression, predominantly expressed in B and T lymphocytes. Highest levels in lung. Also expressed in brain, colon, heart, kidney, ovary, and prostate. Weak expression in liver, pancreas, muscle, small intestine, spleen and stomach.

Its subcellular location is the nucleus. It localises to the cytoplasm. Transcriptional coactivator for CREB1 which activates transcription through both consensus and variant cAMP response element (CRE) sites. Acts as a coactivator, in the SIK/TORC signaling pathway, being active when dephosphorylated and acts independently of CREB1 'Ser-133' phosphorylation. Enhances the interaction of CREB1 with TAF4. Regulates the expression of specific CREB-activated genes such as the steroidogenic gene, StAR. Potent coactivator of PPARGC1A and inducer of mitochondrial biogenesis in muscle cells. Also coactivator for TAX activation of the human T-cell leukemia virus type 1 (HTLV-1) long terminal repeats (LTR). This is CREB-regulated transcription coactivator 3 (CRTC3) from Homo sapiens (Human).